The following is a 216-amino-acid chain: uncharacterized protein (216 aa).

The tract at residues 55-216 (NEDKAEAMSN…NEKEKDVNPK (162 aa)) is disordered. Composition is skewed to basic and acidic residues over residues 134–152 (LTEKPLTDTEPELHPDNHV), 177–187 (KINDKSDDTLH), and 207–216 (NEKEKDVNPK).

This is an uncharacterized protein from Caenorhabditis elegans.